The primary structure comprises 445 residues: Argininosuccinate synthase (445 aa).

ATP-binding positions include 17-25 (AFSGGLDTS) and Ala43. Residue Tyr99 participates in L-citrulline binding. Residues Gly129 and Thr131 each contribute to the ATP site. Positions 131, 135, and 136 each coordinate L-aspartate. Asn135 is a binding site for L-citrulline. Residue Asp136 coordinates ATP. Residues Arg139 and Ser192 each contribute to the L-citrulline site. Residue Asp194 coordinates ATP. Residues Thr201, Glu203, and Glu280 each coordinate L-citrulline.

It belongs to the argininosuccinate synthase family. Type 2 subfamily. Homotetramer.

It localises to the cytoplasm. The enzyme catalyses L-citrulline + L-aspartate + ATP = 2-(N(omega)-L-arginino)succinate + AMP + diphosphate + H(+). It functions in the pathway amino-acid biosynthesis; L-arginine biosynthesis; L-arginine from L-ornithine and carbamoyl phosphate: step 2/3. In Acidobacterium capsulatum (strain ATCC 51196 / DSM 11244 / BCRC 80197 / JCM 7670 / NBRC 15755 / NCIMB 13165 / 161), this protein is Argininosuccinate synthase.